The primary structure comprises 136 residues: Large ribosomal subunit protein uL16 (136 aa).

It belongs to the universal ribosomal protein uL16 family. In terms of assembly, part of the 50S ribosomal subunit.

Binds 23S rRNA and is also seen to make contacts with the A and possibly P site tRNAs. This chain is Large ribosomal subunit protein uL16, found in Erwinia tasmaniensis (strain DSM 17950 / CFBP 7177 / CIP 109463 / NCPPB 4357 / Et1/99).